The primary structure comprises 436 residues: GTPase Der (436 aa).

2 consecutive EngA-type G domains span residues 4–167 (PTVA…PVEE) and 175–351 (IRFS…ESQN). GTP-binding positions include 10–17 (GRPNVGKS), 57–61 (DTGGI), 119–122 (NKVD), 181–188 (GRPNVGKS), 229–233 (DTAGM), and 294–297 (NKWD). One can recognise a KH-like domain in the interval 352-436 (KRIPSAVLND…PIHLIARKRK (85 aa)).

Belongs to the TRAFAC class TrmE-Era-EngA-EngB-Septin-like GTPase superfamily. EngA (Der) GTPase family. Associates with the 50S ribosomal subunit.

In terms of biological role, GTPase that plays an essential role in the late steps of ribosome biogenesis. The polypeptide is GTPase Der (Streptococcus uberis (strain ATCC BAA-854 / 0140J)).